Consider the following 190-residue polypeptide: Xanthine phosphoribosyltransferase (190 aa).

Positions 20 and 27 each coordinate xanthine. Ala-128 to Ala-132 serves as a coordination point for 5-phospho-alpha-D-ribose 1-diphosphate. Lys-156 serves as a coordination point for xanthine.

This sequence belongs to the purine/pyrimidine phosphoribosyltransferase family. Xpt subfamily. In terms of assembly, homodimer.

It localises to the cytoplasm. The catalysed reaction is XMP + diphosphate = xanthine + 5-phospho-alpha-D-ribose 1-diphosphate. Its pathway is purine metabolism; XMP biosynthesis via salvage pathway; XMP from xanthine: step 1/1. In terms of biological role, converts the preformed base xanthine, a product of nucleic acid breakdown, to xanthosine 5'-monophosphate (XMP), so it can be reused for RNA or DNA synthesis. This chain is Xanthine phosphoribosyltransferase, found in Pseudomonas aeruginosa (strain LESB58).